A 202-amino-acid chain; its full sequence is Holliday junction resolvase RecU (202 aa).

Residues Thr85, Asp87, Glu100, and Gln119 each contribute to the Mg(2+) site.

The protein belongs to the RecU family. Mg(2+) serves as cofactor.

It localises to the cytoplasm. The enzyme catalyses Endonucleolytic cleavage at a junction such as a reciprocal single-stranded crossover between two homologous DNA duplexes (Holliday junction).. Functionally, endonuclease that resolves Holliday junction intermediates in genetic recombination. Cleaves mobile four-strand junctions by introducing symmetrical nicks in paired strands. Promotes annealing of linear ssDNA with homologous dsDNA. Required for DNA repair, homologous recombination and chromosome segregation. This Streptococcus pyogenes serotype M5 (strain Manfredo) protein is Holliday junction resolvase RecU.